The primary structure comprises 1106 residues: MAEYWQQLTNGAGEAGPGNESSAMADCNGGHESAAVGGSCNRHSNNNYVNFNQFIMQHNLGGGAPSNATSTMQHPVGSSYTNFSLGGGGGAFGLNPPVASASTSHFANVSHQSPNFYSQAMIPTYQNGDGIARVTVTSSYGSVNPSNSNFSSFYTPFGNNPFDFSASKLQASAPEFVPNFAKLSLEETPAAATTNGNSTASLETAINETRPRTLRAQEPAERGANNQCSNHNYERERERERDRDRDRERDRDRDRDRDRDRDRDRDRDSRPGNTRQQRRSDYRDDREDRYERSDRRRPQKQQRYDNHRSNKRRDDWNRNRDRINGFPRAVDDLDTSNESAHPSPEKQSQLQQISPRRGPPLPPADNEKLSQREKLVRDIEQRRLECLVCVEAIKSHQPTWSCRNCYHMLHLKCTITWASSSKSEVGWRCPACQNVLQDLPRDYLCFCGKLKNPPVSRTELAHSCGEVCCRIEGCSHACTLLCHPGPCPPCQANVVRSCGCGRSTKTMQCAMKEEVLCGEICDKLLNCGEHRCQAECHSGKCAACSEQVVQQCHCGKQERKVPCTRESQDKRTYSCKDSCGQPLPCGHHKCKDSCHAGSCRPCKLSPEQITSCPCGKMPVPAGQRSSCLDPIPTCEGICSRTLRCGKPAHPHQCGSKCHLGQCPPCPKQTGVKCRCGHMDQMIKCRQLCNRADDARCKRRCTKKRSCGKHKCNVECCIDIDHDCPLPCNRTLSCGKHKCDQPCHRGNCPPCYRSSFEELYCECGAEVIYPPVPCGTKKPICKLPCSRIHPCDHPPQHNCHSGPTCPPCMIFTTKLCHGNHELRKTIPCSQPNFSCGMACGKPLPCGGHKCIKPCHEGPCQSAGEICRQSCTKPRPTCGHKCAAACHEGACPETPCKELVEVQCECGNRKQNRSCQELAREHSRIATIQLASSMAEMSRGNYMELSEILAPAKKSNKTLDCNDECRLLERNRRLAAALSSGNSDTKQKCLTKYSEFVRGFAKKNPALTKSVYETLTDLVKLAKESKQRSRSHSFPTMNREKRQLVHELCEVFGIESVSYDKEPNRNVVATAHKDRCWFPATSIMEVLARESGQRRVPVPSNNAWGLKK.

Disordered regions lie at residues 7-26 (QLTN…AMAD) and 189-371 (PAAA…KLSQ). Over residues 189 to 201 (PAAATTNGNSTAS) the composition is skewed to low complexity. Composition is skewed to basic and acidic residues over residues 232–270 (NYER…RDSR) and 278–323 (RRSD…RDRI). T335 bears the Phosphothreonine mark. A phosphoserine mark is found at S336, S339, S343, and S354. Residues 336–354 (SNESAHPSPEKQSQLQQIS) are compositionally biased toward polar residues. Residues 386-433 (CLVCVEAIKSHQPTWSCRNCYHMLHLKCTITWASSSKSEVGWRCPACQ) form an RING-type; atypical zinc finger. NF-X1-type zinc fingers lie at residues 474-492 (CSHA…PCQA), 527-546 (CGEH…ACSE), 585-604 (CGHH…PCKL), 644-667 (CGKP…PCPK), 706-725 (CGKH…DCPL), 733-752 (CGKH…PCYR), 844-867 (CGGH…ICRQ), and 876-896 (CGHK…PCKE). One can recognise an R3H domain in the interval 1006 to 1071 (TKSVYETLTD…NRNVVATAHK (66 aa)).

Belongs to the NFX1 family. Ovaries and embryonic central nervous system.

The protein localises to the nucleus. Its function is as follows. Plays an essential role during the late stages of embryonic neurogenesis. May either fine-tune the guidance or the spatial maintenance of the migrating SNB and in nerve roots, which are composed of axons originating from distinct groups of motor neurons and may be required to either guide or maintain the position of these nerves along a direct and straight path to their ultimate targets in particular muscle fields. May play a role in egg chamber development and/or may confer essential maternal contributions to the early embryo. This chain is Protein shuttle craft (stc), found in Drosophila melanogaster (Fruit fly).